The chain runs to 332 residues: MSEPVLMDRFARKVDYLRMSVTDRCDFRCVYCMAEEMTFLPRQQILSLEEILQVAERFVALGTRKIRLTGGEPLVRAGVVGLCEKIAALPGLRELCMTTNGSQLDKLAAPLFKAGVTRLNISLDSLDPQRFRELTRTGDLHKVIAGIDAANAAGFVHTKLNCVVMHGRNDDEINDLLAFAIDRNLDVSFIEEMPLGIISEHSRAESFYSSDQVRERIAERYTLVPSTDSTQGPSRYWRLAEAPGIRIGFISPHSHNFCGTCNRVRMTVEGRLLLCLGNEHSVDLKAVLRANPGQPEKLEKAIIDAMQLKPWSHNFTHDDGVQVVRFMNMTGG.

The Radical SAM core domain maps to 9-220 (RFARKVDYLR…DQVRERIAER (212 aa)). A GTP-binding site is contributed by Arg18. 2 residues coordinate [4Fe-4S] cluster: Cys25 and Cys29. Tyr31 is a binding site for S-adenosyl-L-methionine. A [4Fe-4S] cluster-binding site is contributed by Cys32. Arg67 serves as a coordination point for GTP. Gly71 lines the S-adenosyl-L-methionine pocket. Residue Thr98 coordinates GTP. Position 122 (Ser122) interacts with S-adenosyl-L-methionine. Lys159 contributes to the GTP binding site. Met193 provides a ligand contact to S-adenosyl-L-methionine. [4Fe-4S] cluster is bound by residues Cys258 and Cys261. 263 to 265 (RVR) provides a ligand contact to GTP. Residue Cys275 participates in [4Fe-4S] cluster binding.

Belongs to the radical SAM superfamily. MoaA family. Monomer and homodimer. It depends on [4Fe-4S] cluster as a cofactor.

It carries out the reaction GTP + AH2 + S-adenosyl-L-methionine = (8S)-3',8-cyclo-7,8-dihydroguanosine 5'-triphosphate + 5'-deoxyadenosine + L-methionine + A + H(+). It participates in cofactor biosynthesis; molybdopterin biosynthesis. In terms of biological role, catalyzes the cyclization of GTP to (8S)-3',8-cyclo-7,8-dihydroguanosine 5'-triphosphate. The sequence is that of GTP 3',8-cyclase from Pseudomonas syringae pv. syringae (strain B728a).